Reading from the N-terminus, the 88-residue chain is UPF0335 protein WRi_003770 (88 aa).

Belongs to the UPF0335 family.

The polypeptide is UPF0335 protein WRi_003770 (Wolbachia sp. subsp. Drosophila simulans (strain wRi)).